The primary structure comprises 1377 residues: DNA-directed RNA polymerase subunit beta (1377 aa).

This sequence belongs to the RNA polymerase beta chain family. In terms of assembly, the RNAP catalytic core consists of 2 alpha, 1 beta, 1 beta' and 1 omega subunit. When a sigma factor is associated with the core the holoenzyme is formed, which can initiate transcription.

The enzyme catalyses RNA(n) + a ribonucleoside 5'-triphosphate = RNA(n+1) + diphosphate. In terms of biological role, DNA-dependent RNA polymerase catalyzes the transcription of DNA into RNA using the four ribonucleoside triphosphates as substrates. In Cereibacter sphaeroides (strain ATCC 17029 / ATH 2.4.9) (Rhodobacter sphaeroides), this protein is DNA-directed RNA polymerase subunit beta.